Here is a 68-residue protein sequence, read N- to C-terminus: Large ribosomal subunit protein uL29 (68 aa).

Belongs to the universal ribosomal protein uL29 family.

The polypeptide is Large ribosomal subunit protein uL29 (rpl29) (Pyrococcus abyssi (strain GE5 / Orsay)).